The following is a 188-amino-acid chain: Early nodulin-like protein 5 (188 aa).

The signal sequence occupies residues 1 to 24 (MDSSKKIIIVMFLVTFYMFSCVSS). Positions 25–128 (TEFEVGGENG…GQKMIVKVME (104 aa)) constitute a Phytocyanin domain. A disulfide bond links Cys82 and Cys116. The disordered stretch occupies residues 127–157 (METESSTESPPPSSSSSSSSSSSLPASTPKA). The segment covering 129-155 (TESSTESPPPSSSSSSSSSSSLPASTP) has biased composition (low complexity). A lipid anchor (GPI-anchor amidated serine) is attached at Ser170. A propeptide spans 171-188 (SSGFVVSAVLIVSVFGLV) (removed in mature form).

This sequence belongs to the early nodulin-like (ENODL) family. Mostly expressed in leaves and flowers, and, to a lower extent, in stems.

Its subcellular location is the cell membrane. May act as a carbohydrate transporter. Mainly required for reproductive functions. The sequence is that of Early nodulin-like protein 5 from Arabidopsis thaliana (Mouse-ear cress).